Here is a 115-residue protein sequence, read N- to C-terminus: Class I hydrophobin C (115 aa).

The first 19 residues, 1–19 (MFSRVLVAALVALPVLVSA), serve as a signal peptide directing secretion. 4 cysteine pairs are disulfide-bonded: cysteine 36-cysteine 93, cysteine 43-cysteine 87, cysteine 44-cysteine 74, and cysteine 94-cysteine 108.

The protein belongs to the fungal hydrophobin family. In terms of assembly, self-assembles to form functional amyloid fibrils called rodlets. Self-assembly into fibrillar rodlets occurs spontaneously at hydrophobic:hydrophilic interfaces and the rodlets further associate laterally to form amphipathic monolayers.

The protein resides in the secreted. It localises to the cell wall. Aerial growth, conidiation, and dispersal of filamentous fungi in the environment rely upon a capability of their secreting small amphipathic proteins called hydrophobins (HPBs) with low sequence identity. Class I can self-assemble into an outermost layer of rodlet bundles on aerial cell surfaces, conferring cellular hydrophobicity that supports fungal growth, development and dispersal; whereas Class II form highly ordered films at water-air interfaces through intermolecular interactions but contribute nothing to the rodlet structure. This Agaricus bisporus (White button mushroom) protein is Class I hydrophobin C.